A 396-amino-acid polypeptide reads, in one-letter code: NDP-glycosyltransferase YjiC (396 aa).

UDP is bound by residues N18, T234, V283, H298, and 302 to 306 (NSTME).

Belongs to the UDP-glycosyltransferase family.

It catalyses the reaction an NDP-glycose + an acceptor = a glycosylated acceptor + NDP.. In terms of biological role, glycosyltransferase that can glycosylate a wide range of substrates, including various flavonoids (flavones, flavonols, flavanones, flavanols, chalcones), isoflavonoids and stilbenes, to produce multiple glycosylated products. It can accept diverse nucleotide diphosphate-D/L-sugars as donors, including ADP-, GDP-, CDP-, TDP- or UDP-alpha-D-glucose, and catalyzes O-, N-, or S-glycosylation. In vitro, catalyzes the glycosylation of, among others, apigenin, 3-hydroxyflavone, phloretin or resveratrol, resulting in multiple glucosylated products, along with mono-, di-, tri- and tetraglucosides. Can also catalyze the glycosylation of the macrolide epothilone A with diverse NDP-D/L-sugars, forming different epothilone A glycoside derivatives. The protein is NDP-glycosyltransferase YjiC of Bacillus licheniformis (strain ATCC 14580 / DSM 13 / JCM 2505 / CCUG 7422 / NBRC 12200 / NCIMB 9375 / NCTC 10341 / NRRL NRS-1264 / Gibson 46).